Reading from the N-terminus, the 195-residue chain is Early E3 22.2 kDa glycoprotein (195 aa).

6 N-linked (GlcNAc...) asparagine; by host glycosylation sites follow: Asn-20, Asn-61, Asn-76, Asn-88, Asn-126, and Asn-139.

The polypeptide is Early E3 22.2 kDa glycoprotein (Canine adenovirus serotype 1 (strain Glaxo) (CAdV-1)).